A 257-amino-acid chain; its full sequence is Aquaporin TIP4-2 (257 aa).

The next 2 helical transmembrane spans lie at 32-52 (LVLTFLFVFTGVSASMAAGAG) and 63-83 (TLAAVAIAHALAAGVLVTAGF). The short motif at 91 to 93 (NPA) is the NPA 1 element. 3 consecutive transmembrane segments (helical) span residues 107–127 (LRALLYVAAQLLASSLACILL), 150–170 (GLVMEVILTFSLLFVTYAMIL), and 178–198 (TIGPLLTGLIVGANSLAGGNF). Positions 204-206 (NPA) match the NPA 2 motif. Residues 225–245 (WIGPLLGGSLAGFVYESLFMV) form a helical membrane-spanning segment.

It belongs to the MIP/aquaporin (TC 1.A.8) family. TIP (TC 1.A.8.10) subfamily.

It is found in the vacuole membrane. In terms of biological role, aquaporins facilitate the transport of water and small neutral solutes across cell membranes. This is Aquaporin TIP4-2 (TIP4-2) from Zea mays (Maize).